The primary structure comprises 231 residues: Protein APE_1056.1 (231 aa).

The 186-residue stretch at 29–214 folds into the AMMECR1 domain; sequence VRIARRAVEE…ETEPRGPVVR (186 aa).

The chain is Protein APE_1056.1 from Aeropyrum pernix (strain ATCC 700893 / DSM 11879 / JCM 9820 / NBRC 100138 / K1).